The primary structure comprises 592 residues: Arginine--tRNA ligase (592 aa).

A 'HIGH' region motif is present at residues 129-139; that stretch reads ANPTGPLHVGH.

Belongs to the class-I aminoacyl-tRNA synthetase family. Monomer.

The protein resides in the cytoplasm. It carries out the reaction tRNA(Arg) + L-arginine + ATP = L-arginyl-tRNA(Arg) + AMP + diphosphate. The chain is Arginine--tRNA ligase from Dichelobacter nodosus (strain VCS1703A).